Here is a 458-residue protein sequence, read N- to C-terminus: Histone acetyltransferase Tip60 homolog (458 aa).

The segment at 1 to 24 (MTEPKKEIIEDENHGISKKIPTDP) is disordered. Residues 30-86 (VTEGCRLLVMMASQEEERWAEVISRCRAANGSIKFYVHYIDCNRRLDEWVQSDRLNL) enclose the Tudor-knot domain. Residues 94-123 (KGGKKGAHLREENRDSNENEGKKSGRKRKI) form a disordered region. Basic and acidic residues predominate over residues 101 to 116 (HLREENRDSNENEGKK). Residues 168 to 446 (TRIRNVECIE…INPAALQWRP (279 aa)) form the MYST-type HAT domain. The C2HC MYST-type zinc finger occupies 201-226 (IYICEFCLKYLKSKTCLKRHMEKCAM). At Lys-268 the chain carries N6-acetyllysine; by autocatalysis. Acetyl-CoA contacts are provided by residues 311–313 (ILV) and 318–324 (QKKGYGS). The active-site Proton donor/acceptor is the Glu-344. Residues Ser-348 and Ser-357 each coordinate acetyl-CoA.

Belongs to the MYST (SAS/MOZ) family. In terms of assembly, interacts with transcription-associated protein trr-1. Probably a component of a complex with histone acetyltransferase (HAT) activity, at least composed of mys-1 and trr-1. In terms of processing, autoacetylation at Lys-268 is required for binding histones with high affinity and for proper function.

The protein resides in the nucleus. The enzyme catalyses L-lysyl-[protein] + acetyl-CoA = N(6)-acetyl-L-lysyl-[protein] + CoA + H(+). Functionally, probable catalytic subunit of the Tip60 chromatin-remodeling complex. Plays a role in acetylation of nucleosomal histone H4 and perhaps also H2A, probably acting as a component of the Tip60 histone acetyltransferase complex. Acts in the determination of vulval and distal tip cell (DTC) precursor cell fates. Involved in the positive regulation of transcription factor daf-16, probably acting by histone acetylation; thereby modulating stress resistance. In Caenorhabditis elegans, this protein is Histone acetyltransferase Tip60 homolog.